A 339-amino-acid chain; its full sequence is Phosphoribosylformylglycinamidine cyclo-ligase (339 aa).

Belongs to the AIR synthase family.

The protein localises to the cytoplasm. It carries out the reaction 2-formamido-N(1)-(5-O-phospho-beta-D-ribosyl)acetamidine + ATP = 5-amino-1-(5-phospho-beta-D-ribosyl)imidazole + ADP + phosphate + H(+). Its pathway is purine metabolism; IMP biosynthesis via de novo pathway; 5-amino-1-(5-phospho-D-ribosyl)imidazole from N(2)-formyl-N(1)-(5-phospho-D-ribosyl)glycinamide: step 2/2. This chain is Phosphoribosylformylglycinamidine cyclo-ligase, found in Streptococcus thermophilus (strain ATCC BAA-250 / LMG 18311).